Reading from the N-terminus, the 415-residue chain is Serine hydroxymethyltransferase (415 aa).

(6S)-5,6,7,8-tetrahydrofolate is bound by residues Leu-122 and 126–128 (GHL). An N6-(pyridoxal phosphate)lysine modification is found at Lys-230.

Belongs to the SHMT family. As to quaternary structure, homodimer. Requires pyridoxal 5'-phosphate as cofactor.

It localises to the cytoplasm. It catalyses the reaction (6R)-5,10-methylene-5,6,7,8-tetrahydrofolate + glycine + H2O = (6S)-5,6,7,8-tetrahydrofolate + L-serine. The protein operates within one-carbon metabolism; tetrahydrofolate interconversion. It functions in the pathway amino-acid biosynthesis; glycine biosynthesis; glycine from L-serine: step 1/1. Functionally, catalyzes the reversible interconversion of serine and glycine with tetrahydrofolate (THF) serving as the one-carbon carrier. This reaction serves as the major source of one-carbon groups required for the biosynthesis of purines, thymidylate, methionine, and other important biomolecules. Also exhibits THF-independent aldolase activity toward beta-hydroxyamino acids, producing glycine and aldehydes, via a retro-aldol mechanism. This is Serine hydroxymethyltransferase from Ralstonia pickettii (strain 12J).